Reading from the N-terminus, the 322-residue chain is Acetyl-coenzyme A carboxylase carboxyl transferase subunit alpha (322 aa).

A CoA carboxyltransferase C-terminal domain is found at 43 to 297 (ALKSKSNALT…KEVLTQQLNK (255 aa)).

Belongs to the AccA family. In terms of assembly, acetyl-CoA carboxylase is a heterohexamer composed of biotin carboxyl carrier protein (AccB), biotin carboxylase (AccC) and two subunits each of ACCase subunit alpha (AccA) and ACCase subunit beta (AccD).

It is found in the cytoplasm. It catalyses the reaction N(6)-carboxybiotinyl-L-lysyl-[protein] + acetyl-CoA = N(6)-biotinyl-L-lysyl-[protein] + malonyl-CoA. Its pathway is lipid metabolism; malonyl-CoA biosynthesis; malonyl-CoA from acetyl-CoA: step 1/1. Component of the acetyl coenzyme A carboxylase (ACC) complex. First, biotin carboxylase catalyzes the carboxylation of biotin on its carrier protein (BCCP) and then the CO(2) group is transferred by the carboxyltransferase to acetyl-CoA to form malonyl-CoA. The protein is Acetyl-coenzyme A carboxylase carboxyl transferase subunit alpha of Vesicomyosocius okutanii subsp. Calyptogena okutanii (strain HA).